The chain runs to 415 residues: Beta-1,4-glucuronyltransferase 1 (415 aa).

Residues 1–8 (MQMSYAIR) are Cytoplasmic-facing. Residues 9–36 (CAFYQLLLAALMLVAMLQLLYLSLLSGL) traverse the membrane as a helical; Signal-anchor for type II membrane protein segment. Residues 37–415 (HGQEEQDQYF…AKYPDSPRHC (379 aa)) lie on the Lumenal side of the membrane. A glycan (N-linked (GlcNAc...) asparagine) is linked at N204. Mn(2+)-binding residues include D227 and D229. N300 carries an N-linked (GlcNAc...) asparagine glycan.

It belongs to the glycosyltransferase 49 family. In terms of assembly, interacts with LARGE1 and LARGE2. The cofactor is Mn(2+).

It localises to the golgi apparatus membrane. The enzyme catalyses 3-O-[beta-D-Xyl-(1-&gt;4)-Rib-ol-P-Rib-ol-P-3-beta-D-GalNAc-(1-&gt;3)-beta-D-GlcNAc-(1-&gt;4)-(O-6-P-alpha-D-Man)]-Thr-[protein] + UDP-alpha-D-glucuronate = 3-O-[beta-D-GlcA-(1-&gt;3)-beta-D-Xyl-(1-&gt;4)-Rib-ol-P-Rib-ol-P-3-beta-D-GalNAc-(1-&gt;3)-beta-D-GlcNAc-(1-&gt;4)-(O-6-P-alpha-D-Man)]-Thr-[protein] + UDP + H(+). It functions in the pathway protein modification; protein glycosylation. In terms of biological role, beta-1,4-glucuronyltransferase involved in O-mannosylation of alpha-dystroglycan (DAG1). Transfers a glucuronic acid (GlcA) residue onto a xylose (Xyl) acceptor to produce the glucuronyl-beta-1,4-xylose-beta disaccharide primer, which is further elongated by LARGE1, during synthesis of phosphorylated O-mannosyl glycan. Phosphorylated O-mannosyl glycan is a carbohydrate structure present in alpha-dystroglycan (DAG1), which is required for binding laminin G-like domain-containing extracellular proteins with high affinity. Required for axon guidance; via its function in O-mannosylation of alpha-dystroglycan (DAG1). This chain is Beta-1,4-glucuronyltransferase 1, found in Bos taurus (Bovine).